A 365-amino-acid chain; its full sequence is Histidinol-phosphate aminotransferase (365 aa).

Lys227 is modified (N6-(pyridoxal phosphate)lysine).

The protein belongs to the class-II pyridoxal-phosphate-dependent aminotransferase family. Histidinol-phosphate aminotransferase subfamily. As to quaternary structure, homodimer. The cofactor is pyridoxal 5'-phosphate.

The enzyme catalyses L-histidinol phosphate + 2-oxoglutarate = 3-(imidazol-4-yl)-2-oxopropyl phosphate + L-glutamate. It participates in amino-acid biosynthesis; L-histidine biosynthesis; L-histidine from 5-phospho-alpha-D-ribose 1-diphosphate: step 7/9. The sequence is that of Histidinol-phosphate aminotransferase from Polaromonas naphthalenivorans (strain CJ2).